Here is a 278-residue protein sequence, read N- to C-terminus: 4-deoxy-L-threo-5-hexosulose-uronate ketol-isomerase (278 aa).

The Zn(2+) site is built by His196, His198, Glu203, and His245.

This sequence belongs to the KduI family. In terms of assembly, homohexamer. Zn(2+) serves as cofactor.

The catalysed reaction is 5-dehydro-4-deoxy-D-glucuronate = 3-deoxy-D-glycero-2,5-hexodiulosonate. It functions in the pathway glycan metabolism; pectin degradation; 2-dehydro-3-deoxy-D-gluconate from pectin: step 4/5. In terms of biological role, catalyzes the isomerization of 5-dehydro-4-deoxy-D-glucuronate to 3-deoxy-D-glycero-2,5-hexodiulosonate. This Escherichia coli O139:H28 (strain E24377A / ETEC) protein is 4-deoxy-L-threo-5-hexosulose-uronate ketol-isomerase.